Consider the following 1202-residue polypeptide: Nitric oxide synthase 3 (1202 aa).

The tract at residues 1–70 (MGNLKSVGQE…PPDGPKFPRV (70 aa)) is disordered. G2 carries the N-myristoyl glycine lipid modification. Residues C15 and C26 are each lipidated (S-palmitoyl cysteine). Residues 15-27 (CGLGLGLGLGLCG) show a composition bias toward gly residues. The span at 33 to 65 (SPAPEPSQAPVPPSPTRPAPDHSPPLTRPPDGP) shows a compositional bias: pro residues. 2 residues coordinate Zn(2+): C93 and C98. The tract at residues 97 to 485 (RCLGSLVFPR…PDPWKGSAAK (389 aa)) is interaction with NOSIP. S101 lines the (6R)-L-erythro-5,6,7,8-tetrahydrobiopterin pocket. C183 is a heme b binding site. 4 residues coordinate L-arginine: Q246, W355, Y356, and E360. A445, W446, and F459 together coordinate (6R)-L-erythro-5,6,7,8-tetrahydrobiopterin. Y474 contributes to the heme b binding site. The segment at 489–509 (ITRKKTFKEVANAVKISASLM) is calmodulin-binding. T494 carries the post-translational modification Phosphothreonine; by AMPK. Positions 519–702 (ATILYGSETG…AFRGWAQAAF (184 aa)) constitute a Flavodoxin-like domain. Positions 525, 526, 527, 529, 571, and 572 each coordinate FMN. Phosphoserine is present on residues S614, S632, and S637. Positions 653, 660, 686, and 690 each coordinate FMN. The FAD-binding FR-type domain maps to 755 to 1001 (RKMFQATILS…IRGAPSFRLP (247 aa)). R775 contributes to the NADP(+) binding site. An FAD-binding site is contributed by H797. The disordered stretch occupies residues 817-843 (EDPPPSTEPVAVEQLEKGSPGGPPPGW). At S835 the chain carries Phosphoserine. R937, Y939, S940, T955, A957, Y961, V974, C975, and S976 together coordinate FAD. T1015, R1048, S1077, R1078, K1084, Y1086, and Q1088 together coordinate NADP(+). Residue T1174 is modified to Phosphothreonine. S1176 is subject to Phosphoserine; by AMPK. S1178 bears the Phosphoserine mark.

Belongs to the NOS family. In terms of assembly, homodimer. Interacts with NOSIP and NOSTRIN. Interacts with HSP90AB1. Forms a complex with ASL, ASS1 and SLC7A1; the complex regulates cell-autonomous L-arginine synthesis and citrulline recycling while channeling extracellular L-arginine to nitric oxide synthesis pathway. Heme b is required as a cofactor. The cofactor is FAD. Requires FMN as cofactor. (6R)-L-erythro-5,6,7,8-tetrahydrobiopterin serves as cofactor. Post-translationally, phosphorylation by AMPK at Ser-1176 in the presence of Ca(2+)-calmodulin (CaM) activates activity. In absence of Ca(2+)-calmodulin, AMPK also phosphorylates Thr-494, resulting in inhibition of activity. As to expression, expressed constitutively by vascular endothelium. Detected in alveolar and serosal epithelial cells as well as in endothelial cells in one day old rat. In adult lung, detected in rare endothelial cells.

Its subcellular location is the membrane. It localises to the caveola. The protein resides in the cytoplasm. It is found in the cytoskeleton. The protein localises to the golgi apparatus. Its subcellular location is the cell membrane. It carries out the reaction 2 L-arginine + 3 NADPH + 4 O2 + H(+) = 2 L-citrulline + 2 nitric oxide + 3 NADP(+) + 4 H2O. With respect to regulation, stimulated by calcium/calmodulin. Inhibited by NOSIP and NOSTRIN. In terms of biological role, produces nitric oxide (NO) which is implicated in vascular smooth muscle relaxation through a cGMP-mediated signal transduction pathway. NO mediates vascular endothelial growth factor (VEGF)-induced angiogenesis in coronary vessels and promotes blood clotting through the activation of platelets. This is Nitric oxide synthase 3 from Rattus norvegicus (Rat).